The primary structure comprises 60 residues: Metallothionein A (60 aa).

The interval 1–28 is beta; the sequence is MDPCDCSKSGTCNCGGSCTCTNCSCKSC. A divalent metal cation is bound by residues Cys4, Cys6, Cys12, Cys14, Cys18, Cys20, Cys23, Cys25, Cys28, Cys32, Cys33, Cys35, Cys36, Cys40, Cys43, Cys47, Cys49, Cys54, Cys58, and Cys59. The tract at residues 29-60 is alpha; sequence KKSCCPCCPSGCTKCASGCVCKGKTCDTSCCQ.

The protein belongs to the metallothionein superfamily. Type 1 family.

Metallothioneins have a high content of cysteine residues that bind various heavy metals. The sequence is that of Metallothionein A (mta) from Chionodraco hamatus (Antarctic teleost icefish).